Here is a 247-residue protein sequence, read N- to C-terminus: ATP synthase subunit a, chloroplastic (247 aa).

5 helical membrane passes run 38-58, 95-115, 134-154, 199-219, and 220-240; these read QVLI…ALAV, VPFI…GALL, INTT…AGLA, LVVV…VMFL, and GLFT…AYIG.

The protein belongs to the ATPase A chain family. As to quaternary structure, F-type ATPases have 2 components, CF(1) - the catalytic core - and CF(0) - the membrane proton channel. CF(1) has five subunits: alpha(3), beta(3), gamma(1), delta(1), epsilon(1). CF(0) has four main subunits: a, b, b' and c.

It localises to the plastid. The protein localises to the chloroplast thylakoid membrane. Its function is as follows. Key component of the proton channel; it plays a direct role in the translocation of protons across the membrane. The polypeptide is ATP synthase subunit a, chloroplastic (Trachelium caeruleum (Blue throatwort)).